A 515-amino-acid chain; its full sequence is Maturase K (515 aa).

The protein belongs to the intron maturase 2 family. MatK subfamily.

The protein localises to the plastid. Its subcellular location is the chloroplast. Usually encoded in the trnK tRNA gene intron. Probably assists in splicing its own and other chloroplast group II introns. The protein is Maturase K of Picea pungens (Colorado spruce).